The following is a 359-amino-acid chain: GTP cyclohydrolase FolE2 (359 aa).

This sequence belongs to the GTP cyclohydrolase IV family.

It carries out the reaction GTP + H2O = 7,8-dihydroneopterin 3'-triphosphate + formate + H(+). It functions in the pathway cofactor biosynthesis; 7,8-dihydroneopterin triphosphate biosynthesis; 7,8-dihydroneopterin triphosphate from GTP: step 1/1. Its function is as follows. Converts GTP to 7,8-dihydroneopterin triphosphate. The chain is GTP cyclohydrolase FolE2 from Cereibacter sphaeroides (strain KD131 / KCTC 12085) (Rhodobacter sphaeroides).